The chain runs to 747 residues: DNA repair and recombination protein RAD54-like (747 aa).

A disordered region spans residues 1 to 41; it reads MRRSLAPSQLAKRKPEGRSCDDEDWQPGLVTPRKRKSSSET. Positions 2-9 are required for chromatin remodeling, strand pairing activities and coupling of ATPase activity; it reads RRSLAPSQ. A Phosphoserine modification is found at S38. In terms of domain architecture, Helicase ATP-binding spans 170 to 345; that stretch reads SRRIPGSHGC…FSLVHFVNSG (176 aa). 183-190 serves as a coordination point for ATP; it reads DEMGLGKT. A DEGH box motif is present at residues 296–299; sequence DEGH. Residues 500–653 form the Helicase C-terminal domain; that stretch reads VLDYILAVTR…CVVDEEQDVE (154 aa). K515 carries the post-translational modification N6-acetyllysine. Phosphoserine; by NEK1 is present on S572.

It belongs to the SNF2/RAD54 helicase family. In terms of assembly, homohexamer. Interacts (via N-terminus) with RAD51. Interacts with NAP1L1. Interacts with BRD9; this interaction orchestrates RAD51-RAD54 complex formation. Post-translationally, acetylated. Acetylation promotes interaction with BRD9, and subsequently with RAD54, which is essential for homologous recombination (HR). Phosphorylated. Phosphorylation at Ser-572 by NEK1 specifically in G2 phase allows efficient removal of RAD51 filaments from DNA.

The protein resides in the nucleus. It catalyses the reaction ATP + H2O = ADP + phosphate + H(+). Plays an essential role in homologous recombination (HR) which is a major pathway for repairing DNA double-strand breaks (DSBs), single-stranded DNA (ssDNA) gaps, and stalled or collapsed replication forks. Acts as a molecular motor during the homology search and guides RAD51 ssDNA along a donor dsDNA thereby changing the homology search from the diffusion-based mechanism to a motor-guided mechanism. Also plays an essential role in RAD51-mediated synaptic complex formation which consists of three strands encased in a protein filament formed once homology is recognized. Once DNA strand exchange occured, dissociates RAD51 from nucleoprotein filaments formed on dsDNA. The polypeptide is DNA repair and recombination protein RAD54-like (RAD54L) (Homo sapiens (Human)).